We begin with the raw amino-acid sequence, 281 residues long: Arabinooligosaccharides transport system permease protein AraQ (281 aa).

A run of 6 helical transmembrane segments spans residues 15-35 (LTLF…CLLL), 81-101 (LVLG…IGYG), 112-132 (IIFV…MLPL), 142-162 (IDSY…VFFF), 185-205 (FGIF…AMII), and 247-267 (MLIS…LFFQ). In terms of domain architecture, ABC transmembrane type-1 spans 77–266 (FFNSLVLGLF…LPVIIIFLFF (190 aa)).

The protein belongs to the binding-protein-dependent transport system permease family. MalFG subfamily. The complex is composed of two ATP-binding proteins (MsmX), two transmembrane proteins (AraP and AraQ) and a solute-binding protein (AraN).

Its subcellular location is the cell membrane. Part of the ABC transporter complex AraNPQ involved in the uptake of arabinooligosaccharides. Transports alpha-1,5-arabinooligosaccharides, at least up to four L-arabinosyl units. Responsible for the translocation of the substrate across the membrane. This chain is Arabinooligosaccharides transport system permease protein AraQ, found in Bacillus subtilis (strain 168).